A 124-amino-acid polypeptide reads, in one-letter code: ATP synthase epsilon chain (124 aa).

The protein belongs to the ATPase epsilon chain family. As to quaternary structure, F-type ATPases have 2 components, CF(1) - the catalytic core - and CF(0) - the membrane proton channel. CF(1) has five subunits: alpha(3), beta(3), gamma(1), delta(1), epsilon(1). CF(0) has three main subunits: a, b and c.

It is found in the cell membrane. Its function is as follows. Produces ATP from ADP in the presence of a proton gradient across the membrane. The protein is ATP synthase epsilon chain of Streptomyces avermitilis (strain ATCC 31267 / DSM 46492 / JCM 5070 / NBRC 14893 / NCIMB 12804 / NRRL 8165 / MA-4680).